Consider the following 357-residue polypeptide: Geranylgeranyl pyrophosphate synthase 11, chloroplastic (357 aa).

The N-terminal 37 residues, 1–37 (MATTLSSSSLFIQFRGRRYNSLSSFNNLQKRTVLSLS), are a transit peptide targeting the chloroplast. Residues K103, R106, and H135 each coordinate isopentenyl diphosphate. The Mg(2+) site is built by D142 and D148. A dimethylallyl diphosphate-binding site is contributed by R153. R154 lines the isopentenyl diphosphate pocket. Residues K242, T243, Q280, K297, and K307 each coordinate dimethylallyl diphosphate.

It belongs to the FPP/GGPP synthase family. Monomer. Mg(2+) serves as cofactor.

Its subcellular location is the plastid. It localises to the chloroplast. The enzyme catalyses isopentenyl diphosphate + dimethylallyl diphosphate = (2E)-geranyl diphosphate + diphosphate. It catalyses the reaction isopentenyl diphosphate + (2E)-geranyl diphosphate = (2E,6E)-farnesyl diphosphate + diphosphate. It carries out the reaction isopentenyl diphosphate + (2E,6E)-farnesyl diphosphate = (2E,6E,10E)-geranylgeranyl diphosphate + diphosphate. It functions in the pathway isoprenoid biosynthesis; farnesyl diphosphate biosynthesis; farnesyl diphosphate from geranyl diphosphate and isopentenyl diphosphate: step 1/1. The protein operates within isoprenoid biosynthesis; geranyl diphosphate biosynthesis; geranyl diphosphate from dimethylallyl diphosphate and isopentenyl diphosphate: step 1/1. Its pathway is isoprenoid biosynthesis; geranylgeranyl diphosphate biosynthesis; geranylgeranyl diphosphate from farnesyl diphosphate and isopentenyl diphosphate: step 1/1. Its function is as follows. Catalyzes the trans-addition of the three molecules of IPP onto DMAPP to form geranylgeranyl pyrophosphate. The polypeptide is Geranylgeranyl pyrophosphate synthase 11, chloroplastic (Arabidopsis thaliana (Mouse-ear cress)).